A 588-amino-acid polypeptide reads, in one-letter code: Proline--tRNA ligase (588 aa).

Belongs to the class-II aminoacyl-tRNA synthetase family. ProS type 1 subfamily. Homodimer.

The protein localises to the cytoplasm. It carries out the reaction tRNA(Pro) + L-proline + ATP = L-prolyl-tRNA(Pro) + AMP + diphosphate. Functionally, catalyzes the attachment of proline to tRNA(Pro) in a two-step reaction: proline is first activated by ATP to form Pro-AMP and then transferred to the acceptor end of tRNA(Pro). As ProRS can inadvertently accommodate and process non-cognate amino acids such as alanine and cysteine, to avoid such errors it has two additional distinct editing activities against alanine. One activity is designated as 'pretransfer' editing and involves the tRNA(Pro)-independent hydrolysis of activated Ala-AMP. The other activity is designated 'posttransfer' editing and involves deacylation of mischarged Ala-tRNA(Pro). The misacylated Cys-tRNA(Pro) is not edited by ProRS. The chain is Proline--tRNA ligase from Corynebacterium glutamicum (strain ATCC 13032 / DSM 20300 / JCM 1318 / BCRC 11384 / CCUG 27702 / LMG 3730 / NBRC 12168 / NCIMB 10025 / NRRL B-2784 / 534).